A 421-amino-acid polypeptide reads, in one-letter code: Trimethyllysine dioxygenase, mitochondrial (421 aa).

The N-terminal 15 residues, 1–15 (MWYHRLSHLHSRLQD), are a transit peptide targeting the mitochondrion. An N6-acetyllysine mark is found at Lys179 and Lys236. Fe cation contacts are provided by His242, Asp244, and His389.

The protein belongs to the gamma-BBH/TMLD family. Homodimer. The cofactor is Fe(2+). L-ascorbate is required as a cofactor. All isoforms, but isoform 8, are widely expressed in adult and fetal tissues. Isoform 8 is restricted to heart and skeletal muscle.

Its subcellular location is the mitochondrion matrix. It carries out the reaction N(6),N(6),N(6)-trimethyl-L-lysine + 2-oxoglutarate + O2 = (3S)-3-hydroxy-N(6),N(6),N(6)-trimethyl-L-lysine + succinate + CO2. Its pathway is amine and polyamine biosynthesis; carnitine biosynthesis. Converts trimethyllysine (TML) into hydroxytrimethyllysine (HTML). The polypeptide is Trimethyllysine dioxygenase, mitochondrial (TMLHE) (Homo sapiens (Human)).